The chain runs to 425 residues: MLDLKRIRTDFDAVAAKLKTRGVSEDTLTTLKALDEQRRALLVQTEELKAQRNIASAAIAQAKRQKKDASQQIADMQQLAANIKVIDAKLADIDQEITSIITVLPNTPHDSVPIGADEEDNVEIRRWGKPRQFDFDIKAHWDLGEALDILDWERGAKVTGARFLFYKNLGARLERALYNFMLDEHLKEGYQEIIPPYMVNHDSMFGTGQYPKFKEDTFELDGTNFVLIPTAEVPLTNYYRGDIIDGKELPIYFTAMSPSFRSEAGSAGRDTRGLIRLHQFHKVEMVKFAKPETSYDELEKMTANAEHILQKLKLPYRVLALCTGDMGFSAAKTYDLEVWIPAQNTYREISSCSNTEDFQARRAQIRYRDEADGKVKLLHTLNGSGLAVGRTVAAILENYQNEDGSVTIPEVLRPYMGGLELIKPR.

An L-serine-binding site is contributed by 230 to 232 (TAE). Position 261–263 (261–263 (RSE)) interacts with ATP. Residue Glu284 coordinates L-serine. Position 348-351 (348-351 (EISS)) interacts with ATP. Ser384 contributes to the L-serine binding site.

Belongs to the class-II aminoacyl-tRNA synthetase family. Type-1 seryl-tRNA synthetase subfamily. As to quaternary structure, homodimer. The tRNA molecule binds across the dimer.

It localises to the cytoplasm. The catalysed reaction is tRNA(Ser) + L-serine + ATP = L-seryl-tRNA(Ser) + AMP + diphosphate + H(+). It carries out the reaction tRNA(Sec) + L-serine + ATP = L-seryl-tRNA(Sec) + AMP + diphosphate + H(+). It participates in aminoacyl-tRNA biosynthesis; selenocysteinyl-tRNA(Sec) biosynthesis; L-seryl-tRNA(Sec) from L-serine and tRNA(Sec): step 1/1. Functionally, catalyzes the attachment of serine to tRNA(Ser). Is also able to aminoacylate tRNA(Sec) with serine, to form the misacylated tRNA L-seryl-tRNA(Sec), which will be further converted into selenocysteinyl-tRNA(Sec). The chain is Serine--tRNA ligase from Streptococcus equi subsp. zooepidemicus (strain MGCS10565).